Consider the following 843-residue polypeptide: DNA helicase MCM8 (843 aa).

The span at 1–23 shows a compositional bias: gly residues; the sequence is MSQGWRGGWSGGRGGNPYAGGWR. The interval 1 to 52 is disordered; sequence MSQGWRGGWSGGRGGNPYAGGWRGRPWRGRGQGGSWSRNSGRDPVCFSTAPP. An MCM domain is found at 394–601; sequence LFQLIVNSLC…DHDHLLSEHV (208 aa). Residue 446–453 participates in ATP binding; the sequence is GDPGLGKS.

It belongs to the MCM family. In terms of assembly, component of the MCM8-MCM9 complex, which forms a hexamer composed of mcm8 and mcm9.

It localises to the nucleus. It carries out the reaction ATP + H2O = ADP + phosphate + H(+). In terms of biological role, component of the MCM8-MCM9 complex, a complex involved in homologous recombination repair following DNA interstrand cross-links and plays a key role during gametogenesis. The MCM8-MCM9 complex probably acts as a hexameric helicase required to process aberrant forks into homologous recombination substrates and to orchestrate homologous recombination with resection, fork stabilization and fork restart. In eggs, required for elongation during DNA replication by facilitating the recruitment of rpa2/rpa34 and stimulating the processivity of DNA polymerases at replication foci. Probably not required for DNA replication in other cells. In Xenopus tropicalis (Western clawed frog), this protein is DNA helicase MCM8 (mcm8).